Reading from the N-terminus, the 857-residue chain is Alanine--tRNA ligase (857 aa).

Residues His-556, His-560, Cys-658, and His-662 each coordinate Zn(2+).

The protein belongs to the class-II aminoacyl-tRNA synthetase family. Requires Zn(2+) as cofactor.

Its subcellular location is the cytoplasm. It catalyses the reaction tRNA(Ala) + L-alanine + ATP = L-alanyl-tRNA(Ala) + AMP + diphosphate. Functionally, catalyzes the attachment of alanine to tRNA(Ala) in a two-step reaction: alanine is first activated by ATP to form Ala-AMP and then transferred to the acceptor end of tRNA(Ala). Also edits incorrectly charged Ser-tRNA(Ala) and Gly-tRNA(Ala) via its editing domain. The protein is Alanine--tRNA ligase of Sulfurovum sp. (strain NBC37-1).